A 174-amino-acid polypeptide reads, in one-letter code: Large ribosomal subunit protein uL10 (174 aa).

The protein belongs to the universal ribosomal protein uL10 family. Part of the ribosomal stalk of the 50S ribosomal subunit. The N-terminus interacts with L11 and the large rRNA to form the base of the stalk. The C-terminus forms an elongated spine to which L12 dimers bind in a sequential fashion forming a multimeric L10(L12)X complex.

Forms part of the ribosomal stalk, playing a central role in the interaction of the ribosome with GTP-bound translation factors. In Verminephrobacter eiseniae (strain EF01-2), this protein is Large ribosomal subunit protein uL10.